The chain runs to 408 residues: S-adenosylmethionine synthase (408 aa).

140-145 (GQGSVD) is an ATP binding site.

This sequence belongs to the AdoMet synthase 2 family. Requires Mg(2+) as cofactor.

The catalysed reaction is L-methionine + ATP + H2O = S-adenosyl-L-methionine + phosphate + diphosphate. The protein operates within amino-acid biosynthesis; S-adenosyl-L-methionine biosynthesis; S-adenosyl-L-methionine from L-methionine: step 1/1. Its function is as follows. Catalyzes the formation of S-adenosylmethionine from methionine and ATP. The sequence is that of S-adenosylmethionine synthase from Caldivirga maquilingensis (strain ATCC 700844 / DSM 13496 / JCM 10307 / IC-167).